A 537-amino-acid chain; its full sequence is Protein swallow (537 aa).

Positions 344–406 (QPNAGKPKKN…SESSHPSSND (63 aa)) are disordered. Composition is skewed to low complexity over residues 371 to 383 (NGNG…HSSS) and 392 to 406 (AAPN…SSND).

In terms of assembly, may be constituted of a homo- or heterodimer.

Its subcellular location is the nucleus. Functionally, has a role in localizing bicoid mRNA at the anterior margin of the oocyte during oogenesis, and a poorly characterized role in nuclear divisions in early embryogenesis. The polypeptide is Protein swallow (swa) (Drosophila pseudoobscura pseudoobscura (Fruit fly)).